The sequence spans 151 residues: Large ribosomal subunit protein eL19 (151 aa).

Positions 57–81 are enriched in basic residues; the sequence is KKGISSARVKKLKEQRKKGRRRGPG. Positions 57 to 95 are disordered; that stretch reads KKGISSARVKKLKEQRKKGRRRGPGSRRGAAGARTPPKE.

Belongs to the eukaryotic ribosomal protein eL19 family. As to quaternary structure, part of the 50S ribosomal subunit.

Binds to the 23S rRNA. The protein is Large ribosomal subunit protein eL19 of Methanocaldococcus jannaschii (strain ATCC 43067 / DSM 2661 / JAL-1 / JCM 10045 / NBRC 100440) (Methanococcus jannaschii).